Here is a 192-residue protein sequence, read N- to C-terminus: Glycerol-3-phosphate acyltransferase (192 aa).

Helical transmembrane passes span 4–24, 54–74, 80–100, 112–132, and 154–174; these read MFWLLATFAYLLGSLSFAILL, LAVLTLLGDLCKGLIPVVLAG, PSQQGWIGVCAVLGHLFPLYF, AGVLLGLYPPAAALAIAAWLL, and LLAWQEPHALLPMSVLTLLIV.

This sequence belongs to the PlsY family. As to quaternary structure, probably interacts with PlsX.

It is found in the cell inner membrane. It carries out the reaction an acyl phosphate + sn-glycerol 3-phosphate = a 1-acyl-sn-glycero-3-phosphate + phosphate. The protein operates within lipid metabolism; phospholipid metabolism. Catalyzes the transfer of an acyl group from acyl-phosphate (acyl-PO(4)) to glycerol-3-phosphate (G3P) to form lysophosphatidic acid (LPA). This enzyme utilizes acyl-phosphate as fatty acyl donor, but not acyl-CoA or acyl-ACP. The sequence is that of Glycerol-3-phosphate acyltransferase from Pseudomonas syringae pv. tomato (strain ATCC BAA-871 / DC3000).